The following is a 217-amino-acid chain: MAGDDHLISGLYAITDAHLMPEPVFLARAEAALRGGARILQYRDKGDVVTDARRRRMQAGALRELCAQYGALFVVNDDPRLARVVGAPALHVGAEDAPPAALRAQFGRAILIGVSCYGSVPQAQEAATQGADYVAFGSFFASPSKPQAPVVSVDVLTAARAMIDLPIVAIGGITEANGRALIAAGADALAVISGVFAAEDVEGAARRFTALFNNRKE.

4-amino-2-methyl-5-(diphosphooxymethyl)pyrimidine is bound by residues 41 to 45 (QYRDK) and Asn76. Mg(2+) is bound by residues Asp77 and Asp96. Ser115 is a binding site for 4-amino-2-methyl-5-(diphosphooxymethyl)pyrimidine. 142–144 (SPS) contributes to the 2-[(2R,5Z)-2-carboxy-4-methylthiazol-5(2H)-ylidene]ethyl phosphate binding site. Lys145 is a 4-amino-2-methyl-5-(diphosphooxymethyl)pyrimidine binding site. 2-[(2R,5Z)-2-carboxy-4-methylthiazol-5(2H)-ylidene]ethyl phosphate-binding positions include Gly172 and 192–193 (IS).

The protein belongs to the thiamine-phosphate synthase family. It depends on Mg(2+) as a cofactor.

The catalysed reaction is 2-[(2R,5Z)-2-carboxy-4-methylthiazol-5(2H)-ylidene]ethyl phosphate + 4-amino-2-methyl-5-(diphosphooxymethyl)pyrimidine + 2 H(+) = thiamine phosphate + CO2 + diphosphate. It carries out the reaction 2-(2-carboxy-4-methylthiazol-5-yl)ethyl phosphate + 4-amino-2-methyl-5-(diphosphooxymethyl)pyrimidine + 2 H(+) = thiamine phosphate + CO2 + diphosphate. It catalyses the reaction 4-methyl-5-(2-phosphooxyethyl)-thiazole + 4-amino-2-methyl-5-(diphosphooxymethyl)pyrimidine + H(+) = thiamine phosphate + diphosphate. The protein operates within cofactor biosynthesis; thiamine diphosphate biosynthesis; thiamine phosphate from 4-amino-2-methyl-5-diphosphomethylpyrimidine and 4-methyl-5-(2-phosphoethyl)-thiazole: step 1/1. Condenses 4-methyl-5-(beta-hydroxyethyl)thiazole monophosphate (THZ-P) and 2-methyl-4-amino-5-hydroxymethyl pyrimidine pyrophosphate (HMP-PP) to form thiamine monophosphate (TMP). This chain is Thiamine-phosphate synthase, found in Acidithiobacillus ferrooxidans (strain ATCC 23270 / DSM 14882 / CIP 104768 / NCIMB 8455) (Ferrobacillus ferrooxidans (strain ATCC 23270)).